A 292-amino-acid polypeptide reads, in one-letter code: Glycine--tRNA ligase alpha subunit (292 aa).

Belongs to the class-II aminoacyl-tRNA synthetase family. In terms of assembly, tetramer of two alpha and two beta subunits.

Its subcellular location is the cytoplasm. It catalyses the reaction tRNA(Gly) + glycine + ATP = glycyl-tRNA(Gly) + AMP + diphosphate. The polypeptide is Glycine--tRNA ligase alpha subunit (Pelotomaculum thermopropionicum (strain DSM 13744 / JCM 10971 / SI)).